The following is a 52-amino-acid chain: Large ribosomal subunit protein bL32c (52 aa).

The protein belongs to the bacterial ribosomal protein bL32 family.

It localises to the plastid. Its subcellular location is the chloroplast. The polypeptide is Large ribosomal subunit protein bL32c (Lobularia maritima (Sweet alyssum)).